We begin with the raw amino-acid sequence, 1680 residues long: GRIP and coiled-coil domain-containing protein 2 (1680 aa).

Residue M1 is modified to N-acetylmethionine. A compositionally biased stretch (low complexity) spans 1–14 (MEDSAPDAVAAAPS). 2 disordered regions span residues 1–23 (MEDS…KLET) and 1468–1522 (KSEP…SSAG). The stretch at 31-1614 (KFAKKQMMLL…REKSVANLEY (1584 aa)) forms a coiled coil. A compositionally biased stretch (polar residues) spans 1469 to 1484 (SEPSTRSPASSHQPSK). S1475 and S1479 each carry phosphoserine. The segment at 1570–1609 (HLNGLLRETEATNAILMEQIKLLKSEIRRLERNQEREKSV) is mediates interaction with RAB6A. The segment at 1570 to 1680 (HLNGLLRETE…SYLHSWSGLR (111 aa)) is mediates interaction with RAB9A. Positions 1605–1655 (REKSVANLEYLKNVLLRFIFLKPGSERERLLPVIDTMLQLSPEEKGKLATV) constitute a GRIP domain.

Homodimer. Interacts (via GRIP domain) with RAB6A (preferentially in its GTP-bound form). May interact (RAB6A-dependent) with ARL1; might be involved in GCC2 Golgi localization. Interacts (probably via GRIP domain) with RAB9A (preferentially in its GTP-bound form). Interacts with CLASP1 and CLASP2; recruits both proteins to membranes of the TGN. Interacts with STX16.

The protein localises to the cytoplasm. It localises to the golgi apparatus. Its subcellular location is the trans-Golgi network membrane. In terms of biological role, golgin which probably tethers transport vesicles to the trans-Golgi network (TGN) and regulates vesicular transport between the endosomes and the Golgi. As a RAB9A effector it is involved in recycling of the mannose 6-phosphate receptor from the late endosomes to the TGN. May also play a role in transport between the recycling endosomes and the Golgi. Required for maintenance of the Golgi structure, it is involved in the biogenesis of noncentrosomal, Golgi-associated microtubules through recruitment of CLASP1 and CLASP2. This is GRIP and coiled-coil domain-containing protein 2 (Gcc2) from Mus musculus (Mouse).